Here is an 84-residue protein sequence, read N- to C-terminus: Small ribosomal subunit protein uS17 (84 aa).

It belongs to the universal ribosomal protein uS17 family. Part of the 30S ribosomal subunit.

One of the primary rRNA binding proteins, it binds specifically to the 5'-end of 16S ribosomal RNA. The polypeptide is Small ribosomal subunit protein uS17 (Shigella boydii serotype 18 (strain CDC 3083-94 / BS512)).